A 248-amino-acid chain; its full sequence is Ribosomal RNA small subunit methyltransferase J (248 aa).

S-adenosyl-L-methionine-binding positions include 98–99 (RD), 114–115 (ER), 150–151 (SS), and Asp168.

It belongs to the methyltransferase superfamily. RsmJ family.

Its subcellular location is the cytoplasm. The enzyme catalyses guanosine(1516) in 16S rRNA + S-adenosyl-L-methionine = N(2)-methylguanosine(1516) in 16S rRNA + S-adenosyl-L-homocysteine + H(+). Functionally, specifically methylates the guanosine in position 1516 of 16S rRNA. The chain is Ribosomal RNA small subunit methyltransferase J from Shewanella baltica (strain OS195).